We begin with the raw amino-acid sequence, 369 residues long: Adenosine 3'-phospho 5'-phosphosulfate transporter 2 (369 aa).

N39 carries N-linked (GlcNAc...) asparagine glycosylation. 6 helical membrane passes run L46–L66, Y79–L99, M115–L135, P138–I158, V168–I188, and N191–G211. A glycan (N-linked (GlcNAc...) asparagine) is linked at N222. The next 4 helical transmembrane spans lie at I235–A255, G266–L285, L292–A314, and F317–Y337.

It belongs to the nucleotide-sugar transporter family. SLC35B subfamily.

The protein resides in the golgi apparatus membrane. It carries out the reaction 3'-phosphoadenylyl sulfate(in) + adenosine 3',5'-bisphosphate(out) = 3'-phosphoadenylyl sulfate(out) + adenosine 3',5'-bisphosphate(in). Probably functions as a 3'-phosphoadenylyl sulfate:adenosine 3',5'-bisphosphate antiporter at the Golgi membranes. Mediates the transport from the cytosol into the lumen of the Golgi of 3'-phosphoadenylyl sulfate/adenosine 3'-phospho 5'-phosphosulfate (PAPS), a universal sulfuryl donor for sulfation events that take place in that compartment. This Mus musculus (Mouse) protein is Adenosine 3'-phospho 5'-phosphosulfate transporter 2.